Reading from the N-terminus, the 340-residue chain is Cysteinyl leukotriene receptor 1 (340 aa).

Residues 1–31 are Extracellular-facing; that stretch reads MDGVRNLTVSCASSNTCNDTIDDFRNQVYST. N-linked (GlcNAc...) asparagine glycans are attached at residues asparagine 6 and asparagine 18. A helical membrane pass occupies residues 32–52; sequence LYSMITVVGFFGNGFVLYVLI. The Cytoplasmic segment spans residues 53-60; the sequence is KTYHEKSA. The chain crosses the membrane as a helical span at residues 61–81; the sequence is YQVYMINLAVADLLCVCTLPL. Topologically, residues 82 to 109 are extracellular; that stretch reads RVVYYVHKGIWLFGDFLCRLSTYALYVN. Cysteine 99 and cysteine 176 form a disulfide bridge. The helical transmembrane segment at 110–130 threads the bilayer; it reads LYCSIFFMTAMSFFRCIAIVF. Topologically, residues 131 to 144 are cytoplasmic; sequence PVQNINLITHKKAK. A helical membrane pass occupies residues 145 to 165; sequence IVCIAIWIFVILTSSPFLMST. The Extracellular segment spans residues 166–196; it reads SYKDEKNNTKCFEPPQXNQAKYHVLVLHYVS. N-linked (GlcNAc...) asparagine glycosylation occurs at asparagine 172. Residues 197–217 traverse the membrane as a helical segment; it reads LFVGFIIPFVIIIVCYTMIIL. The Cytoplasmic portion of the chain corresponds to 218–233; the sequence is TLLKNSMKKNISSRKK. A helical transmembrane segment spans residues 234-254; it reads AIGMIIVVTAAFLISFMPYHI. Topologically, residues 255–279 are extracellular; that stretch reads QRTIHLHFLHNDTKHCDSVLRMQKS. Asparagine 265 is a glycosylation site (N-linked (GlcNAc...) asparagine). The helical transmembrane segment at 280-300 threads the bilayer; sequence VXITLSLAASNCCFDPLLYFF. Topologically, residues 301–340 are cytoplasmic; that stretch reads SGGNFREGLSTFRKHSLSTMTYVPKKKTSLPEKAQEIYKE.

It belongs to the G-protein coupled receptor 1 family.

It localises to the cell membrane. Its function is as follows. Receptor for cysteinyl leukotrienes mediating constriction of the microvascular smooth muscle during an inflammatory response. This response is mediated via a G-protein that activates a phosphatidylinositol-calcium second messenger system. The chain is Cysteinyl leukotriene receptor 1 (CYSLTR1) from Sus scrofa (Pig).